The sequence spans 168 residues: Large ribosomal subunit protein uL10 (168 aa).

It belongs to the universal ribosomal protein uL10 family. In terms of assembly, part of the ribosomal stalk of the 50S ribosomal subunit. The N-terminus interacts with L11 and the large rRNA to form the base of the stalk. The C-terminus forms an elongated spine to which L12 dimers bind in a sequential fashion forming a multimeric L10(L12)X complex.

Functionally, forms part of the ribosomal stalk, playing a central role in the interaction of the ribosome with GTP-bound translation factors. The protein is Large ribosomal subunit protein uL10 of Levilactobacillus brevis (strain ATCC 367 / BCRC 12310 / CIP 105137 / JCM 1170 / LMG 11437 / NCIMB 947 / NCTC 947) (Lactobacillus brevis).